A 203-amino-acid chain; its full sequence is uncharacterized protein (203 aa).

This sequence belongs to the DadA oxidoreductase family.

In terms of biological role, either a functional dehydrogenase or a non-functional fragment. This is an uncharacterized protein from Sinorhizobium fredii (strain NBRC 101917 / NGR234).